A 640-amino-acid polypeptide reads, in one-letter code: Protein cereblon (640 aa).

The span at 1–11 (MDDEETAEIDE) shows a compositional bias: acidic residues. 2 disordered regions span residues 1 to 25 (MDDE…ELGP) and 92 to 159 (REDP…EAVP). Residues 113-137 (QPAQQEEQASLPYDSPSRASISSRH) are compositionally biased toward low complexity. The Lon N-terminal domain occupies 278-506 (RMLIFMHQHI…IIDTTLKQES (229 aa)). The region spanning 505 to 614 (ESLFYCRYCN…LAGSSVRIGK (110 aa)) is the CULT domain. Positions 510, 513, 579, and 582 each coordinate Zn(2+).

Belongs to the CRBN family. Likely a component of a DCX (DDB1-CUL4-X-box) protein ligase complex. May interact with pic/DDB1. Post-translationally, ubiquitinated.

It localises to the nucleus. Its pathway is protein modification; protein ubiquitination. In terms of biological role, substrate recognition component of a DCX (DDB1-CUL4-X-box) E3 protein ligase complex that mediates the ubiquitination and subsequent proteasomal degradation of target proteins. Has an essential role in mediating growth by negatively regulating insulin signaling. It also has a role in maintaining presynaptic function in the neuromuscular junction synapses of third-instar larvae. This Drosophila virilis (Fruit fly) protein is Protein cereblon.